A 95-amino-acid chain; its full sequence is Synaptobrevin-A (95 aa).

Over 1–70 (MSEPVNKVKQ…KRLMWCRNIK (70 aa)) the chain is Cytoplasmic. In terms of domain architecture, v-SNARE coiled-coil homology spans 7-67 (KVKQTQQQVD…NEIKRLMWCR (61 aa)). A helical; Anchor for type IV membrane protein membrane pass occupies residues 71–91 (LTLIIIAVVVLLLVVIIVPIV). At 92-95 (LKFT) the chain is on the vesicular side.

Belongs to the synaptobrevin family.

The protein localises to the cytoplasmic vesicle. Its subcellular location is the secretory vesicle membrane. In terms of biological role, involved in the targeting and/or fusion of transport vesicles to their target membrane. The chain is Synaptobrevin-A (sybA) from Dictyostelium discoideum (Social amoeba).